The sequence spans 245 residues: Probable transcriptional regulatory protein Aflv_0709 (245 aa).

Positions 1–14 (MAGHSKWKNIQRRK) are enriched in basic residues. The disordered stretch occupies residues 1–21 (MAGHSKWKNIQRRKNAQDAKR).

Belongs to the TACO1 family.

The protein resides in the cytoplasm. This Anoxybacillus flavithermus (strain DSM 21510 / WK1) protein is Probable transcriptional regulatory protein Aflv_0709.